The chain runs to 232 residues: Sensory rhodopsin III (232 aa).

The next 7 helical transmembrane spans lie at 5 to 25, 39 to 59, 73 to 93, 100 to 120, 125 to 145, 168 to 188, and 194 to 214; these read IVWY…FVWF, LPPI…LIAG, FADW…LAGV, LAVA…SMSG, IAFA…IKTF, VVTW…TGII, and NFLV…ILLV. An N6-(retinylidene)lysine modification is found at lysine 205.

Belongs to the archaeal/bacterial/fungal opsin family. As to quaternary structure, interacts with HtrM. Post-translationally, the covalent binding of retinal to the apoprotein, bacterioopsin, generates bacteriorhodopsin.

Its subcellular location is the membrane. Its function is as follows. Sensory rhodopsin. Associates with an unusual transducer lacking a methyl-accepting transducer domain found in all other photosensory transducers. The chromophore is all-trans-retinal in the dark. The chain is Sensory rhodopsin III (xop2) from Haloarcula marismortui (strain ATCC 43049 / DSM 3752 / JCM 8966 / VKM B-1809) (Halobacterium marismortui).